Here is a 247-residue protein sequence, read N- to C-terminus: Protein GrpE (247 aa).

2 disordered regions span residues 1–64 (MNDE…QALD) and 214–247 (SMGP…EKSD). Composition is skewed to polar residues over residues 30 to 39 (DEPSLSNVAE), 49 to 63 (DVTS…SQAL), and 228 to 241 (TEQS…TDQQ).

It belongs to the GrpE family. In terms of assembly, homodimer.

The protein localises to the cytoplasm. Its function is as follows. Participates actively in the response to hyperosmotic and heat shock by preventing the aggregation of stress-denatured proteins, in association with DnaK and GrpE. It is the nucleotide exchange factor for DnaK and may function as a thermosensor. Unfolded proteins bind initially to DnaJ; upon interaction with the DnaJ-bound protein, DnaK hydrolyzes its bound ATP, resulting in the formation of a stable complex. GrpE releases ADP from DnaK; ATP binding to DnaK triggers the release of the substrate protein, thus completing the reaction cycle. Several rounds of ATP-dependent interactions between DnaJ, DnaK and GrpE are required for fully efficient folding. The sequence is that of Protein GrpE from Prochlorococcus marinus (strain MIT 9211).